Here is an 81-residue protein sequence, read N- to C-terminus: ATP synthase subunit c (81 aa).

A run of 2 helical transmembrane segments spans residues 5–25 and 57–77; these read IAAG…IGAG and VGLV…FVFA.

This sequence belongs to the ATPase C chain family. F-type ATPases have 2 components, F(1) - the catalytic core - and F(0) - the membrane proton channel. F(1) has five subunits: alpha(3), beta(3), gamma(1), delta(1), epsilon(1). F(0) has three main subunits: a(1), b(2) and c(10-14). The alpha and beta chains form an alternating ring which encloses part of the gamma chain. F(1) is attached to F(0) by a central stalk formed by the gamma and epsilon chains, while a peripheral stalk is formed by the delta and b chains.

It localises to the cell membrane. Functionally, f(1)F(0) ATP synthase produces ATP from ADP in the presence of a proton or sodium gradient. F-type ATPases consist of two structural domains, F(1) containing the extramembraneous catalytic core and F(0) containing the membrane proton channel, linked together by a central stalk and a peripheral stalk. During catalysis, ATP synthesis in the catalytic domain of F(1) is coupled via a rotary mechanism of the central stalk subunits to proton translocation. Key component of the F(0) channel; it plays a direct role in translocation across the membrane. A homomeric c-ring of between 10-14 subunits forms the central stalk rotor element with the F(1) delta and epsilon subunits. In Mycobacterium bovis (strain ATCC BAA-935 / AF2122/97), this protein is ATP synthase subunit c.